The sequence spans 314 residues: Ribonuclease Z (314 aa).

Positions 62, 64, 66, 67, 144, 215, and 273 each coordinate Zn(2+). The Proton acceptor role is filled by D66.

This sequence belongs to the RNase Z family. As to quaternary structure, homodimer. The cofactor is Zn(2+).

The enzyme catalyses Endonucleolytic cleavage of RNA, removing extra 3' nucleotides from tRNA precursor, generating 3' termini of tRNAs. A 3'-hydroxy group is left at the tRNA terminus and a 5'-phosphoryl group is left at the trailer molecule.. Functionally, zinc phosphodiesterase, which displays some tRNA 3'-processing endonuclease activity. Probably involved in tRNA maturation, by removing a 3'-trailer from precursor tRNA. This is Ribonuclease Z from Prochlorococcus marinus (strain NATL1A).